A 175-amino-acid polypeptide reads, in one-letter code: Albumin-1 (175 aa).

Cysteines 135 and 141 form a disulfide.

It belongs to the protease inhibitor I3 (leguminous Kunitz-type inhibitor) family.

Its function is as follows. 2S seed storage protein. The polypeptide is Albumin-1 (Psophocarpus tetragonolobus (Winged bean)).